Consider the following 95-residue polypeptide: Protein TusB (95 aa).

Belongs to the DsrH/TusB family. As to quaternary structure, heterohexamer, formed by a dimer of trimers. The hexameric TusBCD complex contains 2 copies each of TusB, TusC and TusD. The TusBCD complex interacts with TusE.

It is found in the cytoplasm. In terms of biological role, part of a sulfur-relay system required for 2-thiolation of 5-methylaminomethyl-2-thiouridine (mnm(5)s(2)U) at tRNA wobble positions. The sequence is that of Protein TusB from Salmonella dublin (strain CT_02021853).